The primary structure comprises 392 residues: LL-diaminopimelate aminotransferase (392 aa).

2 residues coordinate substrate: Y13 and G38. Pyridoxal 5'-phosphate contacts are provided by residues Y67, 102–103 (SK), Y127, N177, Y208, and 236–238 (SCS). 3 residues coordinate substrate: K103, Y127, and N177. Residue K239 is modified to N6-(pyridoxal phosphate)lysine. R247 contacts pyridoxal 5'-phosphate. Residue R366 participates in substrate binding.

The protein belongs to the class-I pyridoxal-phosphate-dependent aminotransferase family. LL-diaminopimelate aminotransferase subfamily. Homodimer. Pyridoxal 5'-phosphate serves as cofactor.

It carries out the reaction (2S,6S)-2,6-diaminopimelate + 2-oxoglutarate = (S)-2,3,4,5-tetrahydrodipicolinate + L-glutamate + H2O + H(+). Its pathway is amino-acid biosynthesis; L-lysine biosynthesis via DAP pathway; LL-2,6-diaminopimelate from (S)-tetrahydrodipicolinate (aminotransferase route): step 1/1. In terms of biological role, involved in the synthesis of meso-diaminopimelate (m-DAP or DL-DAP), required for both lysine and peptidoglycan biosynthesis. Catalyzes the direct conversion of tetrahydrodipicolinate to LL-diaminopimelate. Can also use m-DAP instead of LL-DAP as the amino-group donor. The polypeptide is LL-diaminopimelate aminotransferase (Gloeobacter violaceus (strain ATCC 29082 / PCC 7421)).